The primary structure comprises 886 residues: Putative respiratory burst oxidase homolog protein H (886 aa).

Disordered regions lie at residues M1–A46 and W64–S103. The Cytoplasmic segment spans residues M1 to K316. A compositionally biased stretch (polar residues) spans W64–S78. 2 EF-hand-like regions span residues S137–E145 and R171–Q183. 2 consecutive EF-hand domains span residues D195–A230 and N239–N274. D208, N210, D212, K214, and E219 together coordinate Ca(2+). S283 is subject to Phosphoserine. Residues L317–E337 form a helical membrane-spanning segment. At F338–M404 the chain is on the extracellular side. The 158-residue stretch at K355 to I512 folds into the Ferric oxidoreductase domain. A helical transmembrane segment spans residues I405–Y421. At P422–S456 the chain is on the cytoplasmic side. A helical transmembrane segment spans residues I457–F477. Over R478–Y499 the chain is Extracellular. Residues A500–I520 form a helical membrane-spanning segment. Topologically, residues E521–T528 are cytoplasmic. Residues T529–F546 traverse the membrane as a helical segment. Topologically, residues S547–Q688 are extracellular. One can recognise an FAD-binding FR-type domain in the interval E552–N686. The chain crosses the membrane as a helical span at residues K689–L709. At K710–F886 the chain is on the cytoplasmic side.

It belongs to the RBOH (TC 5.B.1.3) family. As to quaternary structure, monomer and homodimer.

It localises to the membrane. In terms of biological role, calcium-dependent NADPH oxidase that generates superoxide. This is Putative respiratory burst oxidase homolog protein H (RBOHH) from Arabidopsis thaliana (Mouse-ear cress).